Consider the following 51-residue polypeptide: Insulin (51 aa).

3 disulfides stabilise this stretch: Cys-7–Cys-37, Cys-19–Cys-50, and Cys-36–Cys-41.

The protein belongs to the insulin family. As to quaternary structure, heterodimer of a B chain and an A chain linked by two disulfide bonds.

It is found in the secreted. Functionally, insulin decreases blood glucose concentration. It increases cell permeability to monosaccharides, amino acids and fatty acids. It accelerates glycolysis, the pentose phosphate cycle, and glycogen synthesis in liver. This is Insulin (INS) from Anser anser anser (Western greylag goose).